Reading from the N-terminus, the 436-residue chain is GTPase Der (436 aa).

2 consecutive EngA-type G domains span residues 4–167 (PTIA…PEQQ) and 176–351 (IKFS…ENHR). Residues 10–17 (GRANVGKS), 57–61 (DTGGI), 119–122 (NKID), 182–189 (GRPNVGKS), 229–233 (DTAGM), and 294–297 (NKWD) contribute to the GTP site. Residues 352-436 (KRVQSSTLNE…PLHLIARKRN (85 aa)) enclose the KH-like domain.

The protein belongs to the TRAFAC class TrmE-Era-EngA-EngB-Septin-like GTPase superfamily. EngA (Der) GTPase family. As to quaternary structure, associates with the 50S ribosomal subunit.

Functionally, GTPase that plays an essential role in the late steps of ribosome biogenesis. The protein is GTPase Der of Macrococcus caseolyticus (strain JCSC5402) (Macrococcoides caseolyticum).